The chain runs to 279 residues: Ethanolamine utilization protein EutJ (279 aa).

Belongs to the EutJ family.

Its pathway is amine and polyamine degradation; ethanolamine degradation. May protect ethanolamine ammonia-lyase (EAL, eutB-eutC) from inhibition, may function in assembling the bacterial microcompartment and/or in refolding EAL, suggesting it may have chaperone activity. Overexpression of eutJ and eutS in E.coli leads to multiple BMC-like structures; eutS expression alone leads to 1 BMC-like structure per cell. Functionally, expression of the eut operon allows this bacteria to use ethanolamine (EA) as a carbon, nitrogen and energy source. It relies on cobalamin (vitamin B12) both as a cofactor for the ethanolamine ammonia-lyase (EAL) activity and to induce the operon. EA enhances bacterial survival in macrophages in a concentration-dependent manner, suggesting it is an important nutrient during infection. This is Ethanolamine utilization protein EutJ from Salmonella typhimurium (strain LT2 / SGSC1412 / ATCC 700720).